The primary structure comprises 402 residues: Multidrug resistance protein MdtH (402 aa).

11 helical membrane-spanning segments follow: residues 13–33 (YFLL…FPLI), 34–54 (SIRF…ALGL), 99–116 (PWLL…GTLF), 139–159 (LLMM…SWLL), 165–185 (LVCA…AWLL), 214–234 (VLTL…LPIM), 243–263 (AAVK…LYPI), 277–297 (LMAG…VSSV), 300–320 (LFVL…ARET), 340–360 (LGLA…FDSG), and 368–388 (LPWV…WWQF).

This sequence belongs to the major facilitator superfamily. DHA1 family. MdtH (TC 2.A.1.2.21) subfamily.

The protein resides in the cell inner membrane. The polypeptide is Multidrug resistance protein MdtH (Enterobacter sp. (strain 638)).